A 170-amino-acid chain; its full sequence is MKDNERRILLGRVVGGFGLRGEIKIESWTEPRDAIFRYQPWLLRSPTGTESMLNGARGYETGKRLIATFPGINDRNGVEAICGTEIYVPRSALPPPHPDEYYWVDLEGLQVHTLEGVVLGSVSHLFSNGANDVIVIHGERERLIPFVQPDYVKSVDFEAERIVVDWDPEF.

The PRC barrel domain occupies 97–170; sequence HPDEYYWVDL…RIVVDWDPEF (74 aa).

It belongs to the RimM family. As to quaternary structure, binds ribosomal protein uS19.

The protein resides in the cytoplasm. In terms of biological role, an accessory protein needed during the final step in the assembly of 30S ribosomal subunit, possibly for assembly of the head region. Essential for efficient processing of 16S rRNA. May be needed both before and after RbfA during the maturation of 16S rRNA. It has affinity for free ribosomal 30S subunits but not for 70S ribosomes. The polypeptide is Ribosome maturation factor RimM (Xylella fastidiosa (strain M23)).